The sequence spans 347 residues: Ryncolin-3 (347 aa).

Residues methionine 1–glycine 19 form the signal peptide. Residues glycine 57 to glycine 114 enclose the Collagen-like domain. The disordered stretch occupies residues proline 62–aspartate 115. A compositionally biased stretch (basic and acidic residues) spans lysine 95–aspartate 115. The 221-residue stretch at aspartate 121 to glutamine 341 folds into the Fibrinogen C-terminal domain. Disulfide bonds link cysteine 132–cysteine 160 and cysteine 284–cysteine 297.

It belongs to the ficolin lectin family. Veficolin subfamily. In terms of processing, hydroxylated. Expressed by the venom duct.

It localises to the secreted. In terms of biological role, initiates complement activation and/or interferes in platelet aggregation and/or blood coagulation. The sequence is that of Ryncolin-3 from Cerberus rynchops (Dog-faced water snake).